The primary structure comprises 141 residues: Endoribonuclease YbeY (141 aa).

Positions 105, 109, and 115 each coordinate Zn(2+).

Belongs to the endoribonuclease YbeY family. Zn(2+) serves as cofactor.

It is found in the cytoplasm. In terms of biological role, single strand-specific metallo-endoribonuclease involved in late-stage 70S ribosome quality control and in maturation of the 3' terminus of the 16S rRNA. In Karelsulcia muelleri (strain GWSS) (Sulcia muelleri), this protein is Endoribonuclease YbeY.